Here is a 352-residue protein sequence, read N- to C-terminus: MFDLNQSLFLRALRRQPVERTPIWIMRQAGRYLPEYRKVREYAGDFLNLCKNPELACEVTLQPLRRYALDAAILFSDILTIPDAMGLGLYFAEGEGPRFTNPLQDTKAIHTLKIPSIPESLSYVFDAARLIRQEMPKELPLIGFSGSPWTLACYMVEGGSSRDFKRILNLIYTEKEAAHLLLSKLAASVTAYLIEQIKAGVNAVMIFDTWGGVLTPQNYKDFSLAYMHQIVQQLKKEYPDIPVILFTKNGGQWLEWMAETGCDALGVDWTCDLASARKRVGGKVALQGNLDPAVLLTTKNCIRSEVGSVLASYGYGTGHIFNLGHGITPDVPPENVAIMIEAVHEISPQYHL.

Substrate is bound by residues Arg-27–Arg-31, Asp-77, Tyr-154, Thr-209, and His-325.

Belongs to the uroporphyrinogen decarboxylase family. In terms of assembly, homodimer.

It is found in the cytoplasm. It carries out the reaction uroporphyrinogen III + 4 H(+) = coproporphyrinogen III + 4 CO2. Its pathway is porphyrin-containing compound metabolism; protoporphyrin-IX biosynthesis; coproporphyrinogen-III from 5-aminolevulinate: step 4/4. Its function is as follows. Catalyzes the decarboxylation of four acetate groups of uroporphyrinogen-III to yield coproporphyrinogen-III. The chain is Uroporphyrinogen decarboxylase from Legionella pneumophila (strain Lens).